A 406-amino-acid polypeptide reads, in one-letter code: Phosphopentomutase (406 aa).

Residues aspartate 10, aspartate 305, histidine 310, aspartate 346, histidine 347, and histidine 358 each coordinate Mn(2+).

It belongs to the phosphopentomutase family. The cofactor is Mn(2+).

It is found in the cytoplasm. The catalysed reaction is 2-deoxy-alpha-D-ribose 1-phosphate = 2-deoxy-D-ribose 5-phosphate. It carries out the reaction alpha-D-ribose 1-phosphate = D-ribose 5-phosphate. The protein operates within carbohydrate degradation; 2-deoxy-D-ribose 1-phosphate degradation; D-glyceraldehyde 3-phosphate and acetaldehyde from 2-deoxy-alpha-D-ribose 1-phosphate: step 1/2. Isomerase that catalyzes the conversion of deoxy-ribose 1-phosphate (dRib-1-P) and ribose 1-phosphate (Rib-1-P) to deoxy-ribose 5-phosphate (dRib-5-P) and ribose 5-phosphate (Rib-5-P), respectively. The chain is Phosphopentomutase from Methylobacterium radiotolerans (strain ATCC 27329 / DSM 1819 / JCM 2831 / NBRC 15690 / NCIMB 10815 / 0-1).